The primary structure comprises 596 residues: Succinate dehydrogenase flavoprotein subunit (596 aa).

FAD contacts are provided by residues 18–23 (GAGGAG), 41–56 (SKLFPTRSHTVAAQGG), and Asp-225. Position 49 is a tele-8alpha-FAD histidine (His-49). Substrate is bound by residues His-246 and Thr-258. The active-site Proton acceptor is the Arg-290. Residue His-357 coordinates substrate. Position 391 (Glu-391) interacts with FAD. Arg-402 provides a ligand contact to substrate. Residue 407–408 (SL) coordinates FAD.

It belongs to the FAD-dependent oxidoreductase 2 family. FRD/SDH subfamily. In terms of assembly, part of an enzyme complex containing four subunits: a flavoprotein, an iron-sulfur, cytochrome b-556, and a hydrophobic anchor protein. The cofactor is FAD.

Its subcellular location is the cell inner membrane. It catalyses the reaction a quinone + succinate = fumarate + a quinol. It participates in carbohydrate metabolism; tricarboxylic acid cycle; fumarate from succinate (bacterial route): step 1/1. The sequence is that of Succinate dehydrogenase flavoprotein subunit (sdhA) from Rickettsia bellii (strain RML369-C).